The sequence spans 218 residues: Pyridoxine/pyridoxamine 5'-phosphate oxidase (218 aa).

Residues 14–17 (RREY) and lysine 72 contribute to the substrate site. Residues 67 to 72 (RIVLLK), 82 to 83 (YT), arginine 88, lysine 89, and glutamine 111 contribute to the FMN site. Substrate contacts are provided by tyrosine 129, arginine 133, and serine 137. FMN contacts are provided by residues 146-147 (QS) and tryptophan 191. 197 to 199 (RLH) contacts substrate. Arginine 201 is a binding site for FMN.

Belongs to the pyridoxamine 5'-phosphate oxidase family. In terms of assembly, homodimer. FMN is required as a cofactor.

The enzyme catalyses pyridoxamine 5'-phosphate + O2 + H2O = pyridoxal 5'-phosphate + H2O2 + NH4(+). It catalyses the reaction pyridoxine 5'-phosphate + O2 = pyridoxal 5'-phosphate + H2O2. Its pathway is cofactor metabolism; pyridoxal 5'-phosphate salvage; pyridoxal 5'-phosphate from pyridoxamine 5'-phosphate: step 1/1. It participates in cofactor metabolism; pyridoxal 5'-phosphate salvage; pyridoxal 5'-phosphate from pyridoxine 5'-phosphate: step 1/1. Functionally, catalyzes the oxidation of either pyridoxine 5'-phosphate (PNP) or pyridoxamine 5'-phosphate (PMP) into pyridoxal 5'-phosphate (PLP). This Escherichia coli O45:K1 (strain S88 / ExPEC) protein is Pyridoxine/pyridoxamine 5'-phosphate oxidase.